Here is a 947-residue protein sequence, read N- to C-terminus: Bifunctional glutamine synthetase adenylyltransferase/adenylyl-removing enzyme (947 aa).

The tract at residues 1–440 is adenylyl removase; the sequence is MTPLSSPLSQ…VFNELIGDDE (440 aa). The adenylyl transferase stretch occupies residues 450-947; the sequence is SEPWREVWQD…ASWRKWLVAV (498 aa).

The protein belongs to the GlnE family. Mg(2+) is required as a cofactor.

The catalysed reaction is [glutamine synthetase]-O(4)-(5'-adenylyl)-L-tyrosine + phosphate = [glutamine synthetase]-L-tyrosine + ADP. It catalyses the reaction [glutamine synthetase]-L-tyrosine + ATP = [glutamine synthetase]-O(4)-(5'-adenylyl)-L-tyrosine + diphosphate. Involved in the regulation of glutamine synthetase GlnA, a key enzyme in the process to assimilate ammonia. When cellular nitrogen levels are high, the C-terminal adenylyl transferase (AT) inactivates GlnA by covalent transfer of an adenylyl group from ATP to specific tyrosine residue of GlnA, thus reducing its activity. Conversely, when nitrogen levels are low, the N-terminal adenylyl removase (AR) activates GlnA by removing the adenylyl group by phosphorolysis, increasing its activity. The regulatory region of GlnE binds the signal transduction protein PII (GlnB) which indicates the nitrogen status of the cell. The protein is Bifunctional glutamine synthetase adenylyltransferase/adenylyl-removing enzyme of Salmonella paratyphi B (strain ATCC BAA-1250 / SPB7).